We begin with the raw amino-acid sequence, 187 residues long: MPHSTADRRLRLTRQALLAAAVAPLLAGCALVMHKPHSAGSSNPWDDSAHPLTDDQAMAQVVEPAKQIVAAADLQAVRAGFSFTSCNDQGDPPYQGTVRMAFLLQGDHDAYFQHVRAAMLSHGWIDGPPPGQYFHGITLHKNGVTANMSLALDHSYGEMILDGECRNTTDHHHDDETTNITNQLVQP.

The N-terminal stretch at 1 to 28 (MPHSTADRRLRLTRQALLAAAVAPLLAG) is a signal peptide. The N-palmitoyl cysteine moiety is linked to residue Cys29. Cys29 carries the S-diacylglycerol cysteine lipid modification.

It localises to the cell membrane. The polypeptide is Putative lipoprotein LppJ (lppJ) (Mycobacterium bovis (strain ATCC BAA-935 / AF2122/97)).